Consider the following 175-residue polypeptide: LCLNATVRNATKVKDGFQLTEPDSGVMWPVNIPDYNKRHVFLNHNFTLVASVTIEEAPSGNTPLLIAVLANTEPTHTMRILYTADNKWMTMLKDEKKPTTESGTWEPKKEHQVALMLQGNKASVYVDGELLGEEEVPLTGEKPLELFAFCFGACGEENPSQESHVTVTNVFLYNR.

This sequence belongs to the glycosyl hydrolase 33 family.

It catalyses the reaction Hydrolysis of alpha-(2-&gt;3)-, alpha-(2-&gt;6)-, alpha-(2-&gt;8)- glycosidic linkages of terminal sialic acid residues in oligosaccharides, glycoproteins, glycolipids, colominic acid and synthetic substrates.. Functionally, developmentally regulated neuraminidase implicated in parasite invasion of cells. May contribute to the pathology during T.cruzi infection by cleaving sialic acid from cells of the immune system. This Trypanosoma cruzi protein is Sialidase 85-1.3 (SA85-1.3).